We begin with the raw amino-acid sequence, 262 residues long: Polyamine aminopropyltransferase (262 aa).

In terms of domain architecture, PABS spans 1-249 (MWITQEITPY…DIHRAAFALP (249 aa)). S-methyl-5'-thioadenosine is bound at residue Asn-29. Position 83 (Asp-83) interacts with spermidine. Asp-155 acts as the Proton acceptor in catalysis.

It belongs to the spermidine/spermine synthase family. Homodimer or homotetramer.

Its subcellular location is the cytoplasm. It catalyses the reaction S-adenosyl 3-(methylsulfanyl)propylamine + putrescine = S-methyl-5'-thioadenosine + spermidine + H(+). The protein operates within amine and polyamine biosynthesis; spermidine biosynthesis; spermidine from putrescine: step 1/1. Catalyzes the irreversible transfer of a propylamine group from the amino donor S-adenosylmethioninamine (decarboxy-AdoMet) to putrescine (1,4-diaminobutane) to yield spermidine. This Helicobacter pylori (strain HPAG1) protein is Polyamine aminopropyltransferase.